A 303-amino-acid chain; its full sequence is N-acetyl-D-glucosamine kinase (303 aa).

ATP is bound by residues 4-11 (GFDIGGTK) and 133-140 (GVGGGLIF). Residues histidine 157, cysteine 177, cysteine 179, and cysteine 184 each coordinate Zn(2+).

It belongs to the ROK (NagC/XylR) family. NagK subfamily.

It carries out the reaction N-acetyl-D-glucosamine + ATP = N-acetyl-D-glucosamine 6-phosphate + ADP + H(+). The protein operates within cell wall biogenesis; peptidoglycan recycling. Catalyzes the phosphorylation of N-acetyl-D-glucosamine (GlcNAc) derived from cell-wall degradation, yielding GlcNAc-6-P. The chain is N-acetyl-D-glucosamine kinase from Escherichia fergusonii (strain ATCC 35469 / DSM 13698 / CCUG 18766 / IAM 14443 / JCM 21226 / LMG 7866 / NBRC 102419 / NCTC 12128 / CDC 0568-73).